Here is a 403-residue protein sequence, read N- to C-terminus: Methylthioribose-1-phosphate isomerase (403 aa).

D277 (proton donor) is an active-site residue.

Belongs to the eIF-2B alpha/beta/delta subunits family. MtnA subfamily.

It is found in the cytoplasm. The protein resides in the nucleus. The enzyme catalyses 5-(methylsulfanyl)-alpha-D-ribose 1-phosphate = 5-(methylsulfanyl)-D-ribulose 1-phosphate. It functions in the pathway amino-acid biosynthesis; L-methionine biosynthesis via salvage pathway; L-methionine from S-methyl-5-thio-alpha-D-ribose 1-phosphate: step 1/6. Catalyzes the interconversion of methylthioribose-1-phosphate (MTR-1-P) into methylthioribulose-1-phosphate (MTRu-1-P). In Lodderomyces elongisporus (strain ATCC 11503 / CBS 2605 / JCM 1781 / NBRC 1676 / NRRL YB-4239) (Yeast), this protein is Methylthioribose-1-phosphate isomerase.